We begin with the raw amino-acid sequence, 260 residues long: MGGILRLTLIPCLYINGDGGMSYQRVLLKLSGEALMGDLGYGIDPAVVGTIAQEIKDVLQAGVQLAIVVGGGNIFRGVKASAAGMDRATADYIGMIATVMNAMTLQDALEQMDIPTRVLTAIAMQEVAEPYIRRRAIRHLEKGRVVIFGAGSGNPFFTTDTTAALRAAEIDAEVVFKATKVDGVYDSDPKTNPNARRFTTLTYSHVLAEDLKVMDSTAIALCKDNNIPIMIFDLGVPGNIVRAIKGEAVGTLVGENCEVS.

ATP is bound at residue 29–32 (KLSG). An involved in allosteric activation by GTP region spans residues 37 to 42 (GDLGYG). Gly71 contributes to the UMP binding site. The ATP site is built by Gly72 and Arg76. Residues Asp91 and 152–159 (SGNPFFTT) each bind UMP. 3 residues coordinate ATP: Thr179, Tyr185, and Asp188.

This sequence belongs to the UMP kinase family. In terms of assembly, homohexamer.

Its subcellular location is the cytoplasm. It carries out the reaction UMP + ATP = UDP + ADP. The protein operates within pyrimidine metabolism; CTP biosynthesis via de novo pathway; UDP from UMP (UMPK route): step 1/1. With respect to regulation, allosterically activated by GTP. Inhibited by UTP. Its function is as follows. Catalyzes the reversible phosphorylation of UMP to UDP. This chain is Uridylate kinase, found in Synechocystis sp. (strain ATCC 27184 / PCC 6803 / Kazusa).